A 357-amino-acid chain; its full sequence is 3-isopropylmalate dehydrogenase (357 aa).

Substrate contacts are provided by Arg97, Arg107, Arg135, and Asp224. The Mg(2+) site is built by Asp224, Asp248, and Asp252. 282–294 contacts NAD(+); that stretch reads GSAPDIAGQDKAN.

This sequence belongs to the isocitrate and isopropylmalate dehydrogenases family. LeuB type 1 subfamily. Homodimer. Requires Mg(2+) as cofactor. It depends on Mn(2+) as a cofactor.

Its subcellular location is the cytoplasm. The enzyme catalyses (2R,3S)-3-isopropylmalate + NAD(+) = 4-methyl-2-oxopentanoate + CO2 + NADH. It participates in amino-acid biosynthesis; L-leucine biosynthesis; L-leucine from 3-methyl-2-oxobutanoate: step 3/4. In terms of biological role, catalyzes the oxidation of 3-carboxy-2-hydroxy-4-methylpentanoate (3-isopropylmalate) to 3-carboxy-4-methyl-2-oxopentanoate. The product decarboxylates to 4-methyl-2 oxopentanoate. The chain is 3-isopropylmalate dehydrogenase from Synechococcus sp. (strain CC9902).